We begin with the raw amino-acid sequence, 125 residues long: PEP-dependent dihydroxyacetone kinase 2, phosphoryl donor subunit DhaM (125 aa).

A PTS EIIA type-4 domain is found at 1-125; it reads MISIVLVSHS…AILQELTNVH (125 aa). Catalysis depends on H9, which acts as the Tele-phosphohistidine intermediate.

Belongs to the PEP-utilizing enzyme family. Homodimer. The dihydroxyacetone kinase complex is composed of a homodimer of DhaM, a homodimer of DhaK and the subunit DhaL.

Its subcellular location is the cytoplasm. It carries out the reaction dihydroxyacetone + phosphoenolpyruvate = dihydroxyacetone phosphate + pyruvate. Functionally, component of the dihydroxyacetone kinase complex, which is responsible for the phosphoenolpyruvate (PEP)-dependent phosphorylation of dihydroxyacetone. DhaM serves as the phosphoryl donor. Is phosphorylated by phosphoenolpyruvate in an EI- and HPr-dependent reaction, and a phosphorelay system on histidine residues finally leads to phosphoryl transfer to DhaL and dihydroxyacetone. This is PEP-dependent dihydroxyacetone kinase 2, phosphoryl donor subunit DhaM from Listeria innocua serovar 6a (strain ATCC BAA-680 / CLIP 11262).